The sequence spans 219 residues: 7-methyl-GTP pyrophosphatase (219 aa).

Aspartate 89 serves as the catalytic Proton acceptor.

The protein belongs to the Maf family. YceF subfamily. A divalent metal cation is required as a cofactor.

The protein resides in the cytoplasm. The catalysed reaction is N(7)-methyl-GTP + H2O = N(7)-methyl-GMP + diphosphate + H(+). Nucleoside triphosphate pyrophosphatase that hydrolyzes 7-methyl-GTP (m(7)GTP). May have a dual role in cell division arrest and in preventing the incorporation of modified nucleotides into cellular nucleic acids. The sequence is that of 7-methyl-GTP pyrophosphatase from Polaromonas sp. (strain JS666 / ATCC BAA-500).